The primary structure comprises 218 residues: Cytochrome b6 (218 aa).

The helical transmembrane segment at 35 to 55 (IFYCLGGITLVCFLIQFATGF) threads the bilayer. Cys-38 serves as a coordination point for heme c. Heme b-binding residues include His-89 and His-103. The next 3 helical transmembrane spans lie at 93–113 (ASMM…TGGF), 119–139 (LTWV…VTGY), and 189–209 (LHTF…FLMI). Residues His-190 and His-205 each contribute to the heme b site.

This sequence belongs to the cytochrome b family. PetB subfamily. As to quaternary structure, the 4 large subunits of the cytochrome b6-f complex are cytochrome b6, subunit IV (17 kDa polypeptide, PetD), cytochrome f and the Rieske protein, while the 4 small subunits are PetG, PetL, PetM and PetN. The complex functions as a dimer. It depends on heme b as a cofactor. Heme c serves as cofactor.

It is found in the cellular thylakoid membrane. Functionally, component of the cytochrome b6-f complex, which mediates electron transfer between photosystem II (PSII) and photosystem I (PSI), cyclic electron flow around PSI, and state transitions. The sequence is that of Cytochrome b6 from Synechococcus sp. (strain RCC307).